Consider the following 93-residue polypeptide: MEMPRRFNTYCPHCHSHFEHEVEKVRSGRSSGTKWDARRTRRGKAVIGNAGRFSKVPGGDKPTKKTDLKYRCSECGKAHLREGWRAGRLTFQE.

Zn(2+) is bound by residues Cys11, Cys14, Cys72, and Cys75. Residues 11–75 (CPHCHSHFEH…TDLKYRCSEC (65 aa)) form a C4-type zinc finger.

It belongs to the eukaryotic ribosomal protein eL42 family. As to quaternary structure, part of the 50S ribosomal subunit. It depends on Zn(2+) as a cofactor.

Binds to the 23S rRNA. This chain is Large ribosomal subunit protein eL42 (rpl44e), found in Natronomonas pharaonis (strain ATCC 35678 / DSM 2160 / CIP 103997 / JCM 8858 / NBRC 14720 / NCIMB 2260 / Gabara) (Halobacterium pharaonis).